The following is a 206-amino-acid chain: Small ribosomal subunit protein uS5 (206 aa).

A compositionally biased stretch (polar residues) spans 1–15 (MTDTPTKQETQSNKD). Residues 1–50 (MTDTPTKQETQSNKDNVPGAIPVEQKKNNRNDRKRNRRGDSKNLERDSDW) are disordered. The segment covering 38-50 (RGDSKNLERDSDW) has biased composition (basic and acidic residues). In terms of domain architecture, S5 DRBM spans 50-113 (WQERVVQIRR…SDGKKNLVRV (64 aa)).

It belongs to the universal ribosomal protein uS5 family. As to quaternary structure, part of the 30S ribosomal subunit. Contacts proteins S4 and S8.

In terms of biological role, with S4 and S12 plays an important role in translational accuracy. Functionally, located at the back of the 30S subunit body where it stabilizes the conformation of the head with respect to the body. The sequence is that of Small ribosomal subunit protein uS5 from Prochlorococcus marinus (strain MIT 9215).